A 394-amino-acid chain; its full sequence is S-adenosylmethionine synthase 3 (394 aa).

Glu11 is a binding site for Mg(2+). His17 contacts ATP. Glu45 is a K(+) binding site. L-methionine contacts are provided by Glu58 and Gln101. Residues 169 to 171 (DGK), 237 to 240 (SGRF), Asp248, 254 to 255 (RK), Ala271, Lys275, and Lys279 contribute to the ATP site. L-methionine is bound at residue Asp248. Lys279 contributes to the L-methionine binding site.

This sequence belongs to the AdoMet synthase family. Homotetramer. The cofactor is Mn(2+). It depends on Mg(2+) as a cofactor. Co(2+) is required as a cofactor. K(+) serves as cofactor.

It localises to the cytoplasm. The enzyme catalyses L-methionine + ATP + H2O = S-adenosyl-L-methionine + phosphate + diphosphate. Its pathway is amino-acid biosynthesis; S-adenosyl-L-methionine biosynthesis; S-adenosyl-L-methionine from L-methionine: step 1/1. Catalyzes the formation of S-adenosylmethionine from methionine and ATP. The reaction comprises two steps that are both catalyzed by the same enzyme: formation of S-adenosylmethionine (AdoMet) and triphosphate, and subsequent hydrolysis of the triphosphate. The sequence is that of S-adenosylmethionine synthase 3 (SAM3) from Hordeum vulgare (Barley).